The chain runs to 591 residues: Aspartate--tRNA(Asp/Asn) ligase (591 aa).

E174 is a binding site for L-aspartate. The segment at 198-201 (QLFK) is aspartate. Residue R220 coordinates L-aspartate. Residues 220 to 222 (RDE) and Q229 each bind ATP. H450 contributes to the L-aspartate binding site. E483 is a binding site for ATP. R490 is a binding site for L-aspartate. ATP is bound at residue 535-538 (GLDR).

This sequence belongs to the class-II aminoacyl-tRNA synthetase family. Type 1 subfamily. In terms of assembly, homodimer.

The protein localises to the cytoplasm. The catalysed reaction is tRNA(Asx) + L-aspartate + ATP = L-aspartyl-tRNA(Asx) + AMP + diphosphate. Its function is as follows. Aspartyl-tRNA synthetase with relaxed tRNA specificity since it is able to aspartylate not only its cognate tRNA(Asp) but also tRNA(Asn). Reaction proceeds in two steps: L-aspartate is first activated by ATP to form Asp-AMP and then transferred to the acceptor end of tRNA(Asp/Asn). This chain is Aspartate--tRNA(Asp/Asn) ligase, found in Pseudomonas syringae pv. syringae (strain B728a).